Consider the following 426-residue polypeptide: 3-phosphoshikimate 1-carboxyvinyltransferase (426 aa).

Residues Lys22, Ser23, and Arg27 each contribute to the 3-phosphoshikimate site. Residue Lys22 coordinates phosphoenolpyruvate. The phosphoenolpyruvate site is built by Gly96 and Arg124. Ser170, Ser171, Gln172, Ser198, Asp314, Asn337, and Lys341 together coordinate 3-phosphoshikimate. Gln172 lines the phosphoenolpyruvate pocket. Asp314 acts as the Proton acceptor in catalysis. Residues Arg345, Arg387, and Lys412 each coordinate phosphoenolpyruvate.

The protein belongs to the EPSP synthase family. As to quaternary structure, monomer.

It is found in the cytoplasm. The enzyme catalyses 3-phosphoshikimate + phosphoenolpyruvate = 5-O-(1-carboxyvinyl)-3-phosphoshikimate + phosphate. It functions in the pathway metabolic intermediate biosynthesis; chorismate biosynthesis; chorismate from D-erythrose 4-phosphate and phosphoenolpyruvate: step 6/7. Functionally, catalyzes the transfer of the enolpyruvyl moiety of phosphoenolpyruvate (PEP) to the 5-hydroxyl of shikimate-3-phosphate (S3P) to produce enolpyruvyl shikimate-3-phosphate and inorganic phosphate. This is 3-phosphoshikimate 1-carboxyvinyltransferase from Shewanella baltica (strain OS185).